We begin with the raw amino-acid sequence, 492 residues long: 2,3-bisphosphoglycerate-independent phosphoglycerate mutase (492 aa).

Residues Asp-11 and Ser-61 each contribute to the Mn(2+) site. The Phosphoserine intermediate role is filled by Ser-61. Residues His-118, 147 to 148 (RD), Arg-177, Arg-183, 248 to 251 (RNDR), and Lys-321 contribute to the substrate site. The Mn(2+) site is built by Asp-387, His-391, Asp-428, His-429, and His-446.

The protein belongs to the BPG-independent phosphoglycerate mutase family. Monomer. Mn(2+) is required as a cofactor.

The enzyme catalyses (2R)-2-phosphoglycerate = (2R)-3-phosphoglycerate. Its pathway is carbohydrate degradation; glycolysis; pyruvate from D-glyceraldehyde 3-phosphate: step 3/5. Its function is as follows. Catalyzes the interconversion of 2-phosphoglycerate and 3-phosphoglycerate. The chain is 2,3-bisphosphoglycerate-independent phosphoglycerate mutase from Helicobacter acinonychis (strain Sheeba).